The chain runs to 534 residues: Probable glycine dehydrogenase (decarboxylating) subunit 2 (534 aa).

Lys273 is subject to N6-(pyridoxal phosphate)lysine.

It belongs to the GcvP family. C-terminal subunit subfamily. The glycine cleavage system is composed of four proteins: P, T, L and H. In this organism, the P 'protein' is a heterodimer of two subunits. Pyridoxal 5'-phosphate is required as a cofactor.

It carries out the reaction N(6)-[(R)-lipoyl]-L-lysyl-[glycine-cleavage complex H protein] + glycine + H(+) = N(6)-[(R)-S(8)-aminomethyldihydrolipoyl]-L-lysyl-[glycine-cleavage complex H protein] + CO2. The glycine cleavage system catalyzes the degradation of glycine. The P protein binds the alpha-amino group of glycine through its pyridoxal phosphate cofactor; CO(2) is released and the remaining methylamine moiety is then transferred to the lipoamide cofactor of the H protein. This chain is Probable glycine dehydrogenase (decarboxylating) subunit 2, found in Bacillus cereus (strain ATCC 14579 / DSM 31 / CCUG 7414 / JCM 2152 / NBRC 15305 / NCIMB 9373 / NCTC 2599 / NRRL B-3711).